A 955-amino-acid polypeptide reads, in one-letter code: MRRININASVALWTVFTILTIWISFALHQPDVQTCDIARTWISTAHVEGFDSKHSRFGEKYSLHLIRASQHAIPQPIRPSGVPVIFVHGNAGGFRQIGPFAGIAQELNDELRLLTKGDAGTEFDFFSIDFNEAYSALHGRTLLDQAEYLNDAIAYILDMYKRNQQEGLQVPESVIVLGHSMGGIVSRVAVTLENYRPQSVNTIITLASPHLIPAATFDADITKVYHLVNDYWRAAFAEGDTNDNPLRDITILSIAGGKSDTMVPSDYVSLDSLVPATNGLSTFTNSIARVWTGIDHDAVMWCHQLRRQIASALFHIVDPNVPSQTKPREVRMSTFHRSFSGSQSLSSAMQDFINIEATPLQDGVEQRLAPGFYWGRNLQMLTNHVINYDSNIDLYERKSGSLLKVWQCRSRQGSSFRQCKRIYPLFVPGINDSVLSHVSVNGILLLDVSKEASESGDWINIDETSMSAAPFNIYGNIVFSTSNMVSQDIAFPALTSGLISYKVLTSGGVGLIRQYMGRNHPSRTYDSKYLIPHYARVDISFHGDGAPFVPFKLKTPTKTDLSTKSYKAPLHLQVFGQGKVTISVDYVGSLGNLFMRYRTLLFSLPTAVLYAVLLLQFWRYYQSGSDAKFLSLRDATGLFIKQYLSWACLVVAGLSFVIKFEFIRDFLHFIQIPATGSSKSYEIETFYGSLYTHIDLFLGISGPIGVVLAPAFLALATGIVVVVTEIVIAVTTLASLAISRGHRKMSLLQTPKNVTIQSSDDPIGDLLHKRTVIIALMALLVLLFVPYQLAFALATASLLALTAYFDAEESASASHDLSTSLYANRQAQEKVGSFINYATTMSVVMVWTTLVNIPVLAVWVQGMVFGRSTIFSSHHNLLSVLPTLLFIENLSFRRMPERGLPFVTYIILGYACFNCTAYGMMHAFMIHHWFNLLAGWLLITSYKRNKTVIKESRIE.

Residue Asn-7 is glycosylated (N-linked (GlcNAc...) asparagine). The chain crosses the membrane as a helical span at residues 8–28; that stretch reads ASVALWTVFTILTIWISFALH. The active site involves Ser-180. Asn-431 is a glycosylation site (N-linked (GlcNAc...) asparagine). A run of 4 helical transmembrane segments spans residues 489-509, 600-620, 643-663, and 703-723; these read IAFP…SGGV, LLFS…FWRY, YLSW…FEFI, and PIGV…VVVV. Asn-753 carries N-linked (GlcNAc...) asparagine glycosylation. Helical transmembrane passes span 772–792, 840–860, and 870–890; these read VIIA…LAFA, TMSV…AVWV, and IFSS…IENL. The N-linked (GlcNAc...) asparagine glycan is linked to Asn-914. Residues 919-939 form a helical membrane-spanning segment; that stretch reads GMMHAFMIHHWFNLLAGWLLI. A glycan (N-linked (GlcNAc...) asparagine) is linked at Asn-945.

Belongs to the GPI inositol-deacylase family.

Its subcellular location is the endoplasmic reticulum membrane. Its function is as follows. Involved in inositol deacylation of GPI-anchored proteins which plays important roles in the quality control and ER-associated degradation of GPI-anchored proteins. This Yarrowia lipolytica (strain CLIB 122 / E 150) (Yeast) protein is GPI inositol-deacylase B (BST1B).